Here is a 353-residue protein sequence, read N- to C-terminus: Photosystem II protein D1 (353 aa).

Position 2 is an N-acetylthreonine (Thr-2). A Phosphothreonine modification is found at Thr-2. The next 3 membrane-spanning stretches (helical) occupy residues 29–46 (YIGW…TATS), 118–133 (HFLL…EWEL), and 142–156 (WIAV…AATA). Position 118 (His-118) interacts with chlorophyll a. Residue Tyr-126 coordinates pheophytin a. [CaMn4O5] cluster-binding residues include Asp-170 and Glu-189. A helical transmembrane segment spans residues 197–218 (FHMLGVAGVFGGSLFSAMHGSL). His-198 contacts chlorophyll a. Residues His-215 and 264–265 (SF) each bind a quinone. His-215 contributes to the Fe cation binding site. His-272 provides a ligand contact to Fe cation. A helical membrane pass occupies residues 274-288 (FLAAWPVVGIWFTAL). Residues His-332, Glu-333, Asp-342, and Ala-344 each contribute to the [CaMn4O5] cluster site. Positions 345 to 353 (ALEVPSLNG) are excised as a propeptide.

It belongs to the reaction center PufL/M/PsbA/D family. In terms of assembly, PSII is composed of 1 copy each of membrane proteins PsbA, PsbB, PsbC, PsbD, PsbE, PsbF, PsbH, PsbI, PsbJ, PsbK, PsbL, PsbM, PsbT, PsbX, PsbY, PsbZ, Psb30/Ycf12, at least 3 peripheral proteins of the oxygen-evolving complex and a large number of cofactors. It forms dimeric complexes. The cofactor is The D1/D2 heterodimer binds P680, chlorophylls that are the primary electron donor of PSII, and subsequent electron acceptors. It shares a non-heme iron and each subunit binds pheophytin, quinone, additional chlorophylls, carotenoids and lipids. D1 provides most of the ligands for the Mn4-Ca-O5 cluster of the oxygen-evolving complex (OEC). There is also a Cl(-1) ion associated with D1 and D2, which is required for oxygen evolution. The PSII complex binds additional chlorophylls, carotenoids and specific lipids.. In terms of processing, tyr-161 forms a radical intermediate that is referred to as redox-active TyrZ, YZ or Y-Z. Post-translationally, C-terminally processed by CTPA; processing is essential to allow assembly of the oxygen-evolving complex and thus photosynthetic growth.

The protein resides in the plastid. It localises to the chloroplast thylakoid membrane. It catalyses the reaction 2 a plastoquinone + 4 hnu + 2 H2O = 2 a plastoquinol + O2. Its function is as follows. Photosystem II (PSII) is a light-driven water:plastoquinone oxidoreductase that uses light energy to abstract electrons from H(2)O, generating O(2) and a proton gradient subsequently used for ATP formation. It consists of a core antenna complex that captures photons, and an electron transfer chain that converts photonic excitation into a charge separation. The D1/D2 (PsbA/PsbD) reaction center heterodimer binds P680, the primary electron donor of PSII as well as several subsequent electron acceptors. The polypeptide is Photosystem II protein D1 (Lolium perenne (Perennial ryegrass)).